A 338-amino-acid polypeptide reads, in one-letter code: mRNA decay activator protein ZFP36L1 (338 aa).

Residues 1-111 (MTTTLVSATI…QKQPGSGQVN (111 aa)) are necessary and sufficient for the association with mRNA decay enzymes and mRNA decay activation. At S54 the chain carries Phosphoserine; by MAPKAPK2. The tract at residues 71-113 (LKGEPAPSLSSRDSRFRDRSFSEGGERLLPTQKQPGSGQVNSS) is disordered. Residues 82-96 (RDSRFRDRSFSEGGE) are compositionally biased toward basic and acidic residues. At S90 the chain carries Phosphoserine; by PKB/AKT1. The residue at position 92 (S92) is a Phosphoserine; by PKB/AKT1 and MAPKAPK2. Polar residues predominate over residues 101-113 (TQKQPGSGQVNSS). 2 C3H1-type zinc fingers span residues 114–142 (RYKTELCRPFEENGACKYGDKCQFAHGIH) and 152–180 (KYKTELCRTFHTIGFCPYGPRCHFIHNAE). Residues 185–338 (LAGGRDLSAD…IFSRLSISDD (154 aa)) form a necessary for mRNA decay activation region. Position 203 is a phosphoserine; by PKB/AKT1 and MAPKAPK2 (S203). The segment at 273 to 338 (SPTTFLFRPM…IFSRLSISDD (66 aa)) is disordered. The span at 305 to 318 (YLSSSSSSHSGSDS) shows a compositional bias: low complexity. The residue at position 318 (S318) is a Phosphoserine. S334 carries the post-translational modification Phosphoserine; by RPS6KA1.

As to quaternary structure, associates with the cytoplasmic CCR4-NOT deadenylase and RNA exosome complexes to trigger ARE-containing mRNA deadenylation and decay processes. Interacts with CNOT1. Interacts (via N-terminus) with CNOT6. Interacts with CNOT7; this interaction is inhibited in response to phorbol 12-myristate 13-acetate (PMA) treatment in a p38 MAPK-dependent manner. Interacts with DCP1A. Interacts (via N-terminus) with DCP2. Interacts (via N-terminus) with EXOSC2. Interacts with XRN1. Interacts (via phosphorylated form) with YWHAB; this interaction occurs in a protein kinase AKT1-dependent manner. Interacts (via phosphorylated form) with YWHAZ; this interaction occurs in a p38 MAPK- and AKT-signaling pathways. Post-translationally, phosphorylated. Phosphorylated by RPS6KA1 at Ser-334 upon phorbol 12-myristate 13-acetate (PMA) treatment; this phosphorylation results in dissociation of the CCR4-NOT deadenylase complex and induces p38 MAPK-mediated stabilization of the low-density lipoprotein receptor LDLR mRNA. Phosphorylated by protein kinase AKT1 at Ser-92 and Ser-203 in response to insulin; these phosphorylations stabilize ZFP36L1, increase the association with 14-3-3 proteins and mediate ARE-containing mRNA stabilization. AKT1-mediated phosphorylation at Ser-92 does not impair ARE-containing RNA-binding. Phosphorylated at Ser-54, Ser-92 and Ser-203 by MAPKAPK2; these phosphorylations increase the association with 14-3-3 proteins and mediate ARE-containing mRNA stabilization in a protein kinase AKT1-independent manner. MAPKAPK2-mediated phosphorylations at Ser-54, Ser-92 and Ser-203 do not impair ARE-containing RNA-binding. Phosphorylations increase the association with 14-3-3 proteins and mediate ARE-containing mRNA stabilization during early adipogenesis in a p38 MAPK- and AKT-dependent manner. In terms of processing, ubiquitinated. Ubiquitination leads to proteasomal degradation, a process inhibited by phosphorylations at Ser-90, Ser-92 and Ser-203. Expressed in preadipocytes and adipocytes. Expressed in the proximal and distal tubules in the renal cortex (at protein level). Expressed in ovary, heart, kidney, lung, spleen and thymus. Weakly expressed in brain, liver and testis. Expressed in osteoblasts. Expressed in embryonic stem cells (ESCs). Expressed through B lymphocyte development.

The protein localises to the nucleus. Its subcellular location is the cytoplasm. The protein resides in the cytoplasmic granule. It is found in the P-body. Zinc-finger RNA-binding protein that destabilizes several cytoplasmic AU-rich element (ARE)-containing mRNA transcripts by promoting their poly(A) tail removal or deadenylation, and hence provide a mechanism for attenuating protein synthesis. Acts as a 3'-untranslated region (UTR) ARE mRNA-binding adapter protein to communicate signaling events to the mRNA decay machinery. Functions by recruiting the CCR4-NOT deadenylating complex and components of the cytoplasmic RNA decay machinery to the bound ARE-containing mRNAs, and hence promotes ARE-mediated mRNA deadenylation and decay processes. Also induces the degradation of ARE-containing mRNAs even in absence of poly(A) tail. Binds to 3'-UTR ARE of numerous mRNAs. Positively regulates early adipogenesis by promoting ARE-mediated mRNA decay of immediate early genes (IEGs). Promotes ARE-mediated mRNA decay of mineralocorticoid receptor NR3C2 mRNA in response to hypertonic stress. Negatively regulates hematopoietic/erythroid cell differentiation by promoting ARE-mediated mRNA decay of the transcription factor STAT5B mRNA. Positively regulates monocyte/macrophage cell differentiation by promoting ARE-mediated mRNA decay of the cyclin-dependent kinase CDK6 mRNA. Promotes degradation of ARE-containing pluripotency-associated mRNAs in embryonic stem cells (ESCs), such as NANOG, through a fibroblast growth factor (FGF)-induced MAPK-dependent signaling pathway, and hence attenuates ESC self-renewal and positively regulates mesendoderm differentiation. May play a role in mediating pro-apoptotic effects in malignant B-cells by promoting ARE-mediated mRNA decay of BCL2 mRNA. In association with ZFP36L2 maintains quiescence on developing B lymphocytes by promoting ARE-mediated decay of several mRNAs encoding cell cycle regulators that help B cells progress through the cell cycle, and hence ensuring accurate variable-diversity-joining (VDJ) recombination and functional immune cell formation. Together with ZFP36L2 is also necessary for thymocyte development and prevention of T-cell acute lymphoblastic leukemia (T-ALL) transformation by promoting ARE-mediated mRNA decay of the oncogenic transcription factor NOTCH1 mRNA. Involved in the delivery of target ARE-mRNAs to processing bodies (PBs). In addition to its cytosolic mRNA-decay function, plays a role in the regulation of nuclear mRNA 3'-end processing; modulates mRNA 3'-end maturation efficiency of the DLL4 mRNA through binding with an ARE embedded in a weak noncanonical polyadenylation (poly(A)) signal in endothelial cells. Also involved in the regulation of stress granule (SG) and P-body (PB) formation and fusion. Plays a role in vasculogenesis and endocardial development. Involved in the regulation of keratinocyte proliferation, differentiation and apoptosis. Plays a role in myoblast cell differentiation. This is mRNA decay activator protein ZFP36L1 from Mus musculus (Mouse).